Here is a 486-residue protein sequence, read N- to C-terminus: Pup--protein ligase (486 aa).

E33 contacts Mg(2+). R76 contacts ATP. Y78 contacts Mg(2+). D80 acts as the Proton acceptor in catalysis. E86 contributes to the Mg(2+) binding site. Positions 89 and 451 each coordinate ATP.

Belongs to the Pup ligase/Pup deamidase family. Pup-conjugating enzyme subfamily.

It catalyses the reaction ATP + [prokaryotic ubiquitin-like protein]-L-glutamate + [protein]-L-lysine = ADP + phosphate + N(6)-([prokaryotic ubiquitin-like protein]-gamma-L-glutamyl)-[protein]-L-lysine.. Its pathway is protein degradation; proteasomal Pup-dependent pathway. It participates in protein modification; protein pupylation. Functionally, catalyzes the covalent attachment of the prokaryotic ubiquitin-like protein modifier Pup to the proteasomal substrate proteins, thereby targeting them for proteasomal degradation. This tagging system is termed pupylation. The ligation reaction involves the side-chain carboxylate of the C-terminal glutamate of Pup and the side-chain amino group of a substrate lysine. The polypeptide is Pup--protein ligase (Bifidobacterium longum (strain DJO10A)).